Here is a 96-residue protein sequence, read N- to C-terminus: Beta-defensin 20 (96 aa).

A signal peptide spans 1–21; sequence MKLPQLLLILLFVVLADSVQP. 3 disulfide bridges follow: Cys24–Cys52, Cys32–Cys46, and Cys36–Cys53.

The protein belongs to the beta-defensin family.

Its subcellular location is the secreted. In terms of biological role, has antibacterial activity. The chain is Beta-defensin 20 (Defb20) from Rattus norvegicus (Rat).